A 557-amino-acid chain; its full sequence is Interferon alpha/beta receptor 1 (557 aa).

A signal peptide spans 1–27 (MMVVLLGATTLVLVAVAPWVLSAAAGG). Residues 28-436 (KNLKSPQKVE…EKTKPGNTSK (409 aa)) are Extracellular-facing. Fibronectin type-III domains follow at residues 32–126 (SPQK…FRKA), 127–227 (QIGP…TVEN), 231–329 (PPEN…TEIQ), and 331–432 (FLLP…TKPG). N-linked (GlcNAc...) asparagine glycosylation is found at asparagine 50, asparagine 58, asparagine 81, asparagine 88, asparagine 110, and asparagine 172. A disulfide bridge links cysteine 79 with cysteine 87. A disulfide bond links cysteine 199 and cysteine 220. N-linked (GlcNAc...) asparagine glycosylation occurs at asparagine 254. Cysteine 283 and cysteine 291 are oxidised to a cystine. N-linked (GlcNAc...) asparagine glycosylation is found at asparagine 313, asparagine 314, asparagine 376, asparagine 416, and asparagine 433. Cysteine 403 and cysteine 426 form a disulfide bridge. A helical transmembrane segment spans residues 437–457 (IWLIVGICIALFALPFVIYAA). The Cytoplasmic segment spans residues 458-557 (KVFLRCINYV…TSEELQQDFV (100 aa)). Cysteine 463 is lipidated: S-palmitoyl cysteine. Phosphotyrosine; by TYK2 is present on residues tyrosine 466 and tyrosine 481. The interval 491-500 (LLSTSEEQIE) is important for interaction with TYK2. A Phosphoserine modification is found at serine 495. Glycyl lysine isopeptide (Lys-Gly) (interchain with G-Cter in ubiquitin) cross-links involve residues lysine 501, lysine 525, and lysine 526. The interval 516-557 (ETNQTDEDHKKYSSQTSQDSGNYSNEDESESKTSEELQQDFV) is disordered. Polar residues predominate over residues 528–539 (SSQTSQDSGNYS). Serine 535 carries the post-translational modification Phosphoserine.

This sequence belongs to the type II cytokine receptor family. Heterodimer with IFNAR2; forming the receptor for type I interferon. Interacts with TYK2. Interacts with STAT1 and STAT2; the interaction requires its phosphorylation at Tyr-466. Interacts (serine-phosphorylated form) with FBXW11, the substrate recognition component of a SCF (SKP1-CUL1-F-box protein) E3 ubiquitin-protein ligase complex. Interacts with SHMT2; this promotes interaction with ABRAXAS2 and the BRISC complex. Interacts with TRIM10; this interaction prevents association between IFNAR1 and TYK2. In terms of processing, ubiquitinated, leading to its internalization and degradation. Polyubiquitinated via 'Lys-48'-linked and 'Lys-63'-linked ubiquitin chains, leading to receptor internalization and lysosomal degradation. The 'Lys-63'-linked ubiquitin chains are cleaved off by the BRISC complex. Post-translationally, phosphorylated on tyrosine residues in response to interferon-binding: phosphorylation by TYK2 tyrosine kinase creates docking sites for STAT proteins. Phosphorylated on serine residues in response to interferon binding; this promotes interaction with FBXW11 and ubiquitination. Palmitoylation at Cys-463 is required for the activation of STAT1 and STAT2. As to expression, IFN receptors are present in all tissues and even on the surface of most IFN-resistant cells. Isoform 1, isoform 2 and isoform 3 are expressed in the IFN-alpha sensitive myeloma cell line U266B1. Isoform 2 and isoform 3 are expressed in the IFN-alpha resistant myeloma cell line U266R. Isoform 1 is not expressed in IFN-alpha resistant myeloma cell line U266R.

The protein localises to the cell membrane. It is found in the late endosome. Its subcellular location is the lysosome. Functionally, together with IFNAR2, forms the heterodimeric receptor for type I interferons (including interferons alpha, beta, epsilon, omega and kappa). Type I interferon binding activates the JAK-STAT signaling cascade, resulting in transcriptional activation or repression of interferon-regulated genes that encode the effectors of the interferon response. Mechanistically, type I interferon-binding brings the IFNAR1 and IFNAR2 subunits into close proximity with one another, driving their associated Janus kinases (JAKs) (TYK2 bound to IFNAR1 and JAK1 bound to IFNAR2) to cross-phosphorylate one another. The activated kinases phosphorylate specific tyrosine residues on the intracellular domains of IFNAR1 and IFNAR2, forming docking sites for the STAT transcription factors. STAT proteins are then phosphorylated by the JAKs, promoting their translocation into the nucleus to regulate expression of interferon-regulated genes. Can also act independently of IFNAR2: form an active IFNB1 receptor by itself and activate a signaling cascade that does not involve activation of the JAK-STAT pathway. In Homo sapiens (Human), this protein is Interferon alpha/beta receptor 1 (IFNAR1).